A 247-amino-acid polypeptide reads, in one-letter code: tRNA (guanine-N(1)-)-methyltransferase (247 aa).

Residues G112 and 131-136 (LGDFVL) each bind S-adenosyl-L-methionine.

It belongs to the RNA methyltransferase TrmD family. As to quaternary structure, homodimer.

The protein localises to the cytoplasm. The enzyme catalyses guanosine(37) in tRNA + S-adenosyl-L-methionine = N(1)-methylguanosine(37) in tRNA + S-adenosyl-L-homocysteine + H(+). Functionally, specifically methylates guanosine-37 in various tRNAs. The protein is tRNA (guanine-N(1)-)-methyltransferase of Syntrophotalea carbinolica (strain DSM 2380 / NBRC 103641 / GraBd1) (Pelobacter carbinolicus).